We begin with the raw amino-acid sequence, 3620 residues long: Cubilin (3620 aa).

The N-terminal stretch at 1 to 20 (MSSPFLWSLIILLTFAESNG) is a signal peptide. Residues 21–32 (EAGGFELQRQKR) constitute a propeptide, removed in mature form. An interaction with AMN region spans residues 39-46 (PRMATERG). Residue Asn-102 is glycosylated (N-linked (GlcNAc...) asparagine). Residues 129–165 (DKKVCSSNPCQNGGTCLNLHDSFFCICPSQWKGPLCS) form the EGF-like 1 domain. 6 disulfides stabilise this stretch: Cys-133–Cys-144, Cys-138–Cys-153, Cys-155–Cys-164, Cys-171–Cys-187, Cys-181–Cys-196, and Cys-198–Cys-207. The EGF-like 2; calcium-binding domain maps to 167–208 (DVNECQIYSGTPLGCQNGATCENTAGSYSCLCSPETHGPQCA). Asn-253 carries an N-linked (GlcNAc...) asparagine glycan. The EGF-like 3; calcium-binding domain occupies 260–301 (DIDECNLQHAPCSPLVQCFNTQGSFYCGACPTGWQGNGYSCQ). Cystine bridges form between Cys-264/Cys-277, Cys-271/Cys-286, Cys-289/Cys-300, Cys-306/Cys-321, Cys-313/Cys-330, Cys-333/Cys-344, Cys-350/Cys-363, Cys-357/Cys-373, Cys-396/Cys-406, Cys-401/Cys-415, Cys-417/Cys-426, Cys-433/Cys-444, Cys-438/Cys-453, Cys-455/Cys-464, Cys-471/Cys-497, Cys-524/Cys-546, Cys-587/Cys-613, Cys-640/Cys-662, and Cys-705/Cys-730. The region spanning 302-345 (DIDECKINNGGCSVVPPVMCVNTLGSYHCQACPPGYQGDGRVCT) is the EGF-like 4; calcium-binding domain. 2 consecutive EGF-like domains span residues 346–382 (VIDI…YTGN) and 392–427 (LSDT…INCT). N-linked (GlcNAc...) asparagine glycosylation is present at Asn-425. Residues 429–465 (NINECLSNPCFNGGTCVDGVNAFSCECTRFWTGFLCQ) enclose the EGF-like 7; calcium-binding domain. CUB domains follow at residues 471–583 (CGGS…WETQ), 587–699 (CGGI…YLTS), 705–812 (CGGN…YQVA), 813–924 (CGGE…FSAA), 928–1038 (CGEI…YEAT), 1044–1158 (CMED…WDGS), 1162–1274 (CGGN…YQQT), 1275–1386 (CRNV…WFIH), 1388–1503 (CGGE…WQAV), 1507–1616 (CGGI…FNQV), 1617–1731 (CGGH…YAAS), 1735–1847 (CGGT…FTKI), and 1849–1960 (GNDN…WFAV). Asn-708 and Asn-745 each carry an N-linked (GlcNAc...) asparagine glycan. A disulfide bridge connects residues Cys-757 and Cys-775. The N-linked (GlcNAc...) asparagine glycan is linked to Asn-777. An intrachain disulfide couples Cys-813 to Cys-838. Asn-853 carries N-linked (GlcNAc...) asparagine glycosylation. Disulfide bonds link Cys-865-Cys-887 and Cys-928-Cys-954. Residue Asn-953 is glycosylated (N-linked (GlcNAc...) asparagine). Glu-976 contributes to the Ca(2+) binding site. Asn-980 carries N-linked (GlcNAc...) asparagine glycosylation. A disulfide bridge connects residues Cys-981 and Cys-1001. Residues Asp-984, Asp-1023, Asp-1025, and Leu-1026 each contribute to the Ca(2+) site. The cysteines at positions 1044 and 1070 are disulfide-linked. Ca(2+) contacts are provided by Glu-1092, Asp-1102, and Asp-1143. Cysteines 1099 and 1121 form a disulfide. Cys-1162 and Cys-1188 are disulfide-bonded. N-linked (GlcNAc...) asparagine glycosylation occurs at Asn-1165. Glu-1210 lines the Ca(2+) pocket. Asn-1214 carries an N-linked (GlcNAc...) asparagine glycan. An intrachain disulfide couples Cys-1215 to Cys-1237. Residues Asp-1218, Asp-1259, and Gln-1262 each coordinate Ca(2+). Cys-1275 and Cys-1303 are joined by a disulfide. N-linked (GlcNAc...) asparagine glycans are attached at residues Asn-1304 and Asn-1316. Glu-1325 is a binding site for Ca(2+). N-linked (GlcNAc...) asparagine glycosylation is present at Asn-1329. Cys-1330 and Cys-1348 are joined by a disulfide. Residues Asp-1333, Asp-1370, and Val-1372 each contribute to the Ca(2+) site. 2 disulfide bridges follow: Cys-1388-Cys-1414 and Cys-1441-Cys-1463. A glycan (N-linked (GlcNAc...) asparagine) is linked at Asn-1497. An intrachain disulfide couples Cys-1507 to Cys-1533. A glycan (N-linked (GlcNAc...) asparagine) is linked at Asn-1548. 5 disulfides stabilise this stretch: Cys-1560–Cys-1578, Cys-1617–Cys-1644, Cys-1672–Cys-1694, Cys-1735–Cys-1761, and Cys-1788–Cys-1809. Asn-1643 carries N-linked (GlcNAc...) asparagine glycosylation. N-linked (GlcNAc...) asparagine glycans are attached at residues Asn-1799, Asn-1816, and Asn-1882. Cysteines 1902 and 1924 form a disulfide. N-linked (GlcNAc...) asparagine glycosylation is present at Asn-1961. Disulfide bonds link Cys-1975–Cys-2003 and Cys-2029–Cys-2051. CUB domains follow at residues 1975 to 2088 (CGGF…FHKS), 2089 to 2210 (CGGY…YEAK), 2214 to 2331 (CGGN…YAIA), 2333 to 2445 (CGGR…FESS), 2449 to 2562 (CGGE…YTSS), 2567 to 2684 (CGGS…YSFT), 2686 to 2798 (CGGI…WNTQ), 2802 to 2916 (CGGI…FVSR), 2917 to 3032 (CGGN…YKIT), 3034 to 3147 (CGGV…FQQT), 3154 to 3271 (CGGY…YTTV), 3275 to 3392 (CGGT…IAGC), 3392 to 3504 (CNRE…WTSS), and 3508 to 3620 (CGGT…TWDS). Residues Asn-2082 and Asn-2114 are each glycosylated (N-linked (GlcNAc...) asparagine). Cystine bridges form between Cys-2089–Cys-2115, Cys-2214–Cys-2244, and Cys-2272–Cys-2294. N-linked (GlcNAc...) asparagine glycosylation occurs at Asn-2317. Residues Cys-2333 and Cys-2360 are joined by a disulfide bond. Residues Asn-2383 and Asn-2397 are each glycosylated (N-linked (GlcNAc...) asparagine). Disulfide bonds link Cys-2387-Cys-2408, Cys-2449-Cys-2475, and Cys-2502-Cys-2524. Asn-2528, Asn-2578, Asn-2589, and Asn-2607 each carry an N-linked (GlcNAc...) asparagine glycan. An intrachain disulfide couples Cys-2567 to Cys-2596. 7 cysteine pairs are disulfide-bonded: Cys-2625/Cys-2646, Cys-2686/Cys-2712, Cys-2739/Cys-2761, Cys-2802/Cys-2828, Cys-2857/Cys-2880, Cys-2917/Cys-2943, and Cys-2974/Cys-2996. An N-linked (GlcNAc...) asparagine glycan is attached at Asn-2810. Residues Asn-2920, Asn-2942, and Asn-2986 are each glycosylated (N-linked (GlcNAc...) asparagine). Thr-3005 is subject to Phosphothreonine. Disulfide bonds link Cys-3034-Cys-3061 and Cys-3088-Cys-3110. Residues Asn-3039, Asn-3100, and Asn-3122 are each glycosylated (N-linked (GlcNAc...) asparagine). Intrachain disulfides connect Cys-3154–Cys-3182 and Cys-3212–Cys-3234. Residues Asn-3265, Asn-3280, and Asn-3292 are each glycosylated (N-linked (GlcNAc...) asparagine). Cystine bridges form between Cys-3275–Cys-3303 and Cys-3329–Cys-3351. Asn-3354 carries N-linked (GlcNAc...) asparagine glycosylation. The cysteines at positions 3392 and 3418 are disulfide-linked. Residues Asn-3427, Asn-3454, and Asn-3530 are each glycosylated (N-linked (GlcNAc...) asparagine). Cystine bridges form between Cys-3445-Cys-3467, Cys-3508-Cys-3534, and Cys-3561-Cys-3583.

In terms of assembly, interacts with AMN. Component of the cubam complex composed of one CUBN trimer and one AMN chain. The cubam complex can dimerize. Interacts with LRP2 in a dual-receptor complex in a calcium-dependent manner. Found in a complex with PID1/PCLI1, LRP1 and CUBNI. Interacts with LRP1 and PID1/PCLI1. The precursor is cleaved by a trans-Golgi proteinase furin, removing a propeptide. Post-translationally, N-glycosylated. Detected in kidney cortex (at protein level). Detected in kidney, duodenum and jejunum.

The protein resides in the apical cell membrane. The protein localises to the cell membrane. It localises to the membrane. It is found in the coated pit. Its subcellular location is the endosome. The protein resides in the lysosome membrane. In terms of biological role, endocytic receptor which plays a role in lipoprotein, vitamin and iron metabolism by facilitating their uptake. Acts together with LRP2 to mediate endocytosis of high-density lipoproteins, GC, hemoglobin, ALB, TF and SCGB1A1. Acts together with AMN to mediate endocytosis of the CBLIF-cobalamin complex. Binds to ALB, MB, Kappa and lambda-light chains, TF, hemoglobin, GC, SCGB1A1, APOA1, high density lipoprotein, and the CBLIF-cobalamin complex. Ligand binding requires calcium. Serves as important transporter in several absorptive epithelia, including intestine, renal proximal tubules and embryonic yolk sac. May play an important role in the development of the peri-implantation embryo through internalization of APOA1 and cholesterol. Binds to LGALS3 at the maternal-fetal interface. The sequence is that of Cubilin (CUBN) from Canis lupus familiaris (Dog).